The following is a 402-amino-acid chain: MDRPRQNDHLGVNRIGKNIRKSPLHQSTFAASTSNGAAPRLQTQPQVYNISKNDFRSIVQQLTGSPSRESLPRPPQNNSLRPQNTRLQRIRPSPLTQLNRPAVPLPSMAPPQSHPQFARQPPHQPPFPQTTQQPMMGHRDQFWSNTAESPVSEYMRYLQSSLGDSGPNANQMQPGHEQRPYIPGHEQRPYVPGNEQQPYMPGNEQRPYIPGHEQRSYMPAQSQSQSQPQPQPQPQQHMMPGPQPRMNMQGPLQPNQYLPPPGLVPSPVPHNLPSPRFNAPVPVTPTQPSPMFSQMYGGFPSPRYNGFGPLQSPTSQFLQPSPTGYPNMFSPRSPYPLLSPGVQYPQPLTPNFSFSQIAQQGSLGPGAGPSQGPPQPPPSPGLMFPLSPSGFFPMPSPRWNDY.

Disordered stretches follow at residues 1 to 44 (MDRP…LQTQ), 63 to 135 (TGSP…QQPM), 160 to 266 (SSLG…LVPS), and 346 to 402 (QPLT…WNDY). Over residues 24 to 44 (LHQSTFAASTSNGAAPRLQTQ) the composition is skewed to polar residues. Positions 55–64 (FRSIVQQLTG) match the VQ motif. A compositionally biased stretch (polar residues) spans 76–87 (QNNSLRPQNTRL). A compositionally biased stretch (pro residues) spans 103 to 113 (VPLPSMAPPQS). Residues 160–173 (SSLGDSGPNANQMQ) are compositionally biased toward polar residues. The segment covering 218-240 (MPAQSQSQSQPQPQPQPQQHMMP) has biased composition (low complexity). The segment covering 257–266 (YLPPPGLVPS) has biased composition (pro residues). The segment covering 349-358 (TPNFSFSQIA) has biased composition (polar residues). The segment covering 371 to 380 (QGPPQPPPSP) has biased composition (pro residues). Residues 381-390 (GLMFPLSPSG) show a composition bias toward low complexity.

In terms of assembly, interacts with WRKY10. Interacts with MPK6.

The protein localises to the nucleus. Modulates seed size by negatively regulating the cellularization of syncytial endosperm. May function by binding and modulating the activity of WRKY10 transcription factor. The chain is Protein HAIKU1 from Arabidopsis thaliana (Mouse-ear cress).